The primary structure comprises 27 residues: Morintide mO5 (27 aa).

One can recognise a Chitin-binding type-1 domain in the interval 1–27 (NGLCCSQYGFCGTTSQYCSRANGCQSN). Cys-4 and Cys-18 form a disulfide bridge.

Seeds (at protein level).

In terms of biological role, chitin-binding protein which functions in defense against chitin-containing fungal pathogens. The protein is Morintide mO5 of Moringa oleifera (Horseradish tree).